We begin with the raw amino-acid sequence, 280 residues long: Putative pyruvate, phosphate dikinase regulatory protein (280 aa).

156–163 (GVSRTSKT) contacts ADP.

The protein belongs to the pyruvate, phosphate/water dikinase regulatory protein family. PDRP subfamily.

The catalysed reaction is N(tele)-phospho-L-histidyl/L-threonyl-[pyruvate, phosphate dikinase] + ADP = N(tele)-phospho-L-histidyl/O-phospho-L-threonyl-[pyruvate, phosphate dikinase] + AMP + H(+). It catalyses the reaction N(tele)-phospho-L-histidyl/O-phospho-L-threonyl-[pyruvate, phosphate dikinase] + phosphate + H(+) = N(tele)-phospho-L-histidyl/L-threonyl-[pyruvate, phosphate dikinase] + diphosphate. Its function is as follows. Bifunctional serine/threonine kinase and phosphorylase involved in the regulation of the pyruvate, phosphate dikinase (PPDK) by catalyzing its phosphorylation/dephosphorylation. This chain is Putative pyruvate, phosphate dikinase regulatory protein, found in Hyphomonas neptunium (strain ATCC 15444).